The chain runs to 147 residues: Elongation factor Tu (147 aa).

The protein belongs to the GTP-binding elongation factor family. EF-Tu/EF-1A subfamily. Monomer.

It localises to the cytoplasm. This protein promotes the GTP-dependent binding of aminoacyl-tRNA to the A-site of ribosomes during protein biosynthesis. The sequence is that of Elongation factor Tu (tuf) from Fructilactobacillus sanfranciscensis (Lactobacillus sanfranciscensis).